A 233-amino-acid polypeptide reads, in one-letter code: Large ribosomal subunit protein uL22m (233 aa).

Belongs to the universal ribosomal protein uL22 family. In terms of assembly, component of the mitochondrial ribosome large subunit (39S) which comprises a 16S rRNA and about 50 distinct proteins.

The protein localises to the mitochondrion. This is Large ribosomal subunit protein uL22m (mRpL22) from Drosophila pseudoobscura pseudoobscura (Fruit fly).